Reading from the N-terminus, the 225-residue chain is 3-dehydroquinate dehydratase (225 aa).

3-dehydroquinate contacts are provided by residues 30 to 32 (EWR) and Arg62. His118 serves as the catalytic Proton donor/acceptor. The active-site Schiff-base intermediate with substrate is Lys143. Positions 186, 205, and 209 each coordinate 3-dehydroquinate.

Belongs to the type-I 3-dehydroquinase family. In terms of assembly, homodimer.

It catalyses the reaction 3-dehydroquinate = 3-dehydroshikimate + H2O. Its pathway is metabolic intermediate biosynthesis; chorismate biosynthesis; chorismate from D-erythrose 4-phosphate and phosphoenolpyruvate: step 3/7. Functionally, involved in the third step of the chorismate pathway, which leads to the biosynthesis of aromatic amino acids. Catalyzes the cis-dehydration of 3-dehydroquinate (DHQ) and introduces the first double bond of the aromatic ring to yield 3-dehydroshikimate. This Streptococcus mutans serotype c (strain ATCC 700610 / UA159) protein is 3-dehydroquinate dehydratase.